Reading from the N-terminus, the 342-residue chain is Dual-specificity RNA methyltransferase RlmN (342 aa).

The active-site Proton acceptor is Glu92. The Radical SAM core domain occupies 98 to 329; it reads DLPRSTLCVS…THVRRSRGGE (232 aa). Cys105 and Cys334 are disulfide-bonded. [4Fe-4S] cluster is bound by residues Cys112, Cys116, and Cys119. S-adenosyl-L-methionine is bound by residues 161-162, Ser193, 215-217, and Asn291; these read GE and SLH. Cys334 serves as the catalytic S-methylcysteine intermediate.

This sequence belongs to the radical SAM superfamily. RlmN family. The cofactor is [4Fe-4S] cluster.

The protein localises to the cytoplasm. It carries out the reaction adenosine(2503) in 23S rRNA + 2 reduced [2Fe-2S]-[ferredoxin] + 2 S-adenosyl-L-methionine = 2-methyladenosine(2503) in 23S rRNA + 5'-deoxyadenosine + L-methionine + 2 oxidized [2Fe-2S]-[ferredoxin] + S-adenosyl-L-homocysteine. The catalysed reaction is adenosine(37) in tRNA + 2 reduced [2Fe-2S]-[ferredoxin] + 2 S-adenosyl-L-methionine = 2-methyladenosine(37) in tRNA + 5'-deoxyadenosine + L-methionine + 2 oxidized [2Fe-2S]-[ferredoxin] + S-adenosyl-L-homocysteine. Its function is as follows. Specifically methylates position 2 of adenine 2503 in 23S rRNA and position 2 of adenine 37 in tRNAs. m2A2503 modification seems to play a crucial role in the proofreading step occurring at the peptidyl transferase center and thus would serve to optimize ribosomal fidelity. This is Dual-specificity RNA methyltransferase RlmN from Syntrophobacter fumaroxidans (strain DSM 10017 / MPOB).